The primary structure comprises 83 residues: Conotoxin LiCr95 (83 aa).

Residues 1 to 22 (MKLTCALIVAMLFLTACQLTTT) form the signal peptide. Residues 23-50 (DDSRGRQKYPTERLRVKMRNPKLSKLTK) constitute a propeptide that is removed on maturation. Cystine bridges form between Cys52–Cys67, Cys59–Cys71, and Cys66–Cys80.

Belongs to the conotoxin O1 superfamily. As to expression, expressed by the venom duct.

It is found in the secreted. The sequence is that of Conotoxin LiCr95 from Conus lividus (Livid cone).